Consider the following 602-residue polypeptide: Aspartate--tRNA(Asp/Asn) ligase (602 aa).

L-aspartate is bound at residue glutamate 176. The aspartate stretch occupies residues 200 to 203 (QQFK). L-aspartate is bound by residues arginine 222 and histidine 452. 222–224 (RDE) contacts ATP. Glutamate 490 lines the ATP pocket. Arginine 497 is an L-aspartate binding site. 542–545 (GIDR) is a binding site for ATP.

It belongs to the class-II aminoacyl-tRNA synthetase family. Type 1 subfamily. As to quaternary structure, homodimer.

The protein localises to the cytoplasm. The enzyme catalyses tRNA(Asx) + L-aspartate + ATP = L-aspartyl-tRNA(Asx) + AMP + diphosphate. In terms of biological role, aspartyl-tRNA synthetase with relaxed tRNA specificity since it is able to aspartylate not only its cognate tRNA(Asp) but also tRNA(Asn). Reaction proceeds in two steps: L-aspartate is first activated by ATP to form Asp-AMP and then transferred to the acceptor end of tRNA(Asp/Asn). This is Aspartate--tRNA(Asp/Asn) ligase from Rickettsia akari (strain Hartford).